We begin with the raw amino-acid sequence, 125 residues long: Succinate dehydrogenase cytochrome b556 subunit (125 aa).

Residues 1–29 (MTKTKQEIYNKRPTSPHLTIYKPQISSTL) lie on the Cytoplasmic side of the membrane. A helical membrane pass occupies residues 30–55 (SILHRMTGVALFFAVSILAWWFILSK). Over 56–68 (FDSNYIKLANCCC) the chain is Periplasmic. Residues 69–89 (IIKICLILTSFAWFYHLCNGI) form a helical membrane-spanning segment. His-84 provides a ligand contact to heme. At 90 to 104 (RHLFWDIGLGFSIKA) the chain is on the cytoplasmic side. The chain crosses the membrane as a helical span at residues 105 to 125 (VNLTGWSVVICSVLFTILLWV).

The protein belongs to the cytochrome b560 family. As to quaternary structure, part of an enzyme complex containing four subunits: a flavoprotein, an iron-sulfur protein, plus two membrane-anchoring proteins, SdhC and SdhD. The complex can form homotrimers. Heme is required as a cofactor.

The protein resides in the cell inner membrane. It functions in the pathway carbohydrate metabolism; tricarboxylic acid cycle. Functionally, membrane-anchoring subunit of succinate dehydrogenase (SDH). The polypeptide is Succinate dehydrogenase cytochrome b556 subunit (sdhC) (Rickettsia bellii (strain RML369-C)).